The chain runs to 143 residues: MQVLAKENIKLNQTVSSKEEAIKLAGQTLIDNGYVTEDYISKMFEREETSSTFMGNFIAIPHGTEEAKSEVLHSGISIIQIPEGVEYGEGNTAKVVFGIAGKNNEHLDILSNIAIICSEEENIERLISAKSEEDLIAIFNEVN.

One can recognise a PTS EIIA type-2 domain in the interval 2–142; that stretch reads QVLAKENIKL…EDLIAIFNEV (141 aa). The active-site Tele-phosphohistidine intermediate is the H62. H62 carries the post-translational modification Phosphohistidine; by HPr. S74 is subject to Phosphoserine.

It localises to the cytoplasm. Functionally, the phosphoenolpyruvate-dependent sugar phosphotransferase system (sugar PTS), a major carbohydrate active transport system, catalyzes the phosphorylation of incoming sugar substrates concomitantly with their translocation across the cell membrane. The enzyme II CmtAB PTS system is involved in D-mannitol transport. This Bacillus subtilis (strain 168) protein is Mannitol-specific phosphotransferase enzyme IIA component (mtlF).